The sequence spans 173 residues: Photosystem I assembly protein Ycf3 (173 aa).

TPR repeat units lie at residues 36–69, 73–106, and 121–154; these read AFAY…EQDD, SYIL…NPRL, and GEQS…APNN.

Belongs to the Ycf3 family.

It is found in the cellular thylakoid membrane. Essential for the assembly of the photosystem I (PSI) complex. May act as a chaperone-like factor to guide the assembly of the PSI subunits. This chain is Photosystem I assembly protein Ycf3, found in Synechococcus sp. (strain JA-3-3Ab) (Cyanobacteria bacterium Yellowstone A-Prime).